A 72-amino-acid chain; its full sequence is Translation initiation factor IF-1 (72 aa).

Residues 1-72 (MAKDGVIEVE…NRGRITYRYK (72 aa)) form the S1-like domain.

Belongs to the IF-1 family. As to quaternary structure, component of the 30S ribosomal translation pre-initiation complex which assembles on the 30S ribosome in the order IF-2 and IF-3, IF-1 and N-formylmethionyl-tRNA(fMet); mRNA recruitment can occur at any time during PIC assembly.

The protein resides in the cytoplasm. One of the essential components for the initiation of protein synthesis. Stabilizes the binding of IF-2 and IF-3 on the 30S subunit to which N-formylmethionyl-tRNA(fMet) subsequently binds. Helps modulate mRNA selection, yielding the 30S pre-initiation complex (PIC). Upon addition of the 50S ribosomal subunit IF-1, IF-2 and IF-3 are released leaving the mature 70S translation initiation complex. This is Translation initiation factor IF-1 from Bifidobacterium adolescentis (strain ATCC 15703 / DSM 20083 / NCTC 11814 / E194a).